The following is a 419-amino-acid chain: MLPGEEALVKCEYMKKNFCLASLIKIIKKSPLRVNPKCSFYSDCGGCSMQEIEPHYQFAIKKKLLINALSRIGKLNDFPEPISITPSQFFHYRNKSTFPVYNESYGNTIIGYYQRNSHKIVDIDNCPVLDHKINKALSDIRLILKDNHINADHDIRRKGGLRHISIRSGINTNEVLITFVSNFSIKKLLFPITNKLNGSESNVVGILNNIQPKPNNKIFGATTEILTGRDYIYDKFCHMDILIGSTSFFQVNLVEAEKAINCIRNIISNTNKIVRIIDAYSGIGTMSIPLASDGYRVIGIEINNEAHEIAIRNAEINNIKTITFENQDVTKYLPKILLPNDFLILDPPRKGLDPSLIDVITKLMPIHICYLSCNPATLARDLSLILREHKYSIISITAFDFFPQTTHLETLVYLKRLTS.

[4Fe-4S] cluster is bound by residues Cys38, Cys44, Cys47, and Cys126. S-adenosyl-L-methionine-binding residues include Gln250, Tyr280, Glu301, and Asp346. Residue Cys373 is the Nucleophile of the active site.

Belongs to the class I-like SAM-binding methyltransferase superfamily. RNA M5U methyltransferase family.

This is an uncharacterized protein from Prochlorococcus marinus (strain SARG / CCMP1375 / SS120).